A 492-amino-acid polypeptide reads, in one-letter code: BTB/POZ domain and ankyrin repeat-containing protein NOOT2 (492 aa).

One can recognise a BTB domain in the interval 25–107; it reads SDVTFQVEGR…LYSGQVSIVP (83 aa). The C2HC NPR-type zinc-finger motif lies at 113–127; the sequence is RPNCGERGCWHTHCT. Zn(2+) is bound by residues cysteine 116, cysteine 121, histidine 123, and cysteine 126. ANK repeat units lie at residues 248–277, 278–307, 312–341, and 345–379; these read QKIR…LNLD, EALA…DVNY, AGKT…DPTV, and DGVT…KLRL. Disordered stretches follow at residues 395–439 and 455–492; these read ENNA…NSIG and TQMG…SHDF. 2 stretches are compositionally biased toward low complexity: residues 397–413 and 425–439; these read NASN…SSAA and SSSS…NSIG. Residues 461-473 are compositionally biased toward basic and acidic residues; the sequence is DDNRHNNSHREAM.

The protein belongs to the plant 'ANKYRIN-BTB/POZ' family. 'NOOT-BOP-COCH-like' (NBCL) subfamily. Homodimer.

It is found in the nucleus. It localises to the cytoplasm. The protein resides in the cell membrane. It participates in protein modification; protein ubiquitination. Its function is as follows. May act as a substrate-specific adapter of an E3 ubiquitin-protein ligase complex (CUL3-RBX1-BTB) which mediates the ubiquitination and subsequent proteasomal degradation of target proteins. Transcriptional co-regulator involved in the promotion of leaf and floral meristem fate and determinacy. Required for the abscission of senescent organs, probably by regulating the cell wall disorganization in abscission zones (AZs, e.g. pulvini at the base of leaves). Involved in the coordination of the symbiotic nodule developmental program; promotes the formation of root nodules by interacting directly with APP1 to modulate the expression of the nuclear transcription factor Y subunit (NF-YA1), a key nodulin. Involved in the regulation of indeterminate nodule identity in association with NOOT1. The chain is BTB/POZ domain and ankyrin repeat-containing protein NOOT2 from Medicago truncatula (Barrel medic).